The chain runs to 251 residues: Ubiquinone/menaquinone biosynthesis C-methyltransferase UbiE (251 aa).

Residues Thr-74, Asp-95, and 123–124 (NA) each bind S-adenosyl-L-methionine.

It belongs to the class I-like SAM-binding methyltransferase superfamily. MenG/UbiE family.

It carries out the reaction a 2-demethylmenaquinol + S-adenosyl-L-methionine = a menaquinol + S-adenosyl-L-homocysteine + H(+). The enzyme catalyses a 2-methoxy-6-(all-trans-polyprenyl)benzene-1,4-diol + S-adenosyl-L-methionine = a 5-methoxy-2-methyl-3-(all-trans-polyprenyl)benzene-1,4-diol + S-adenosyl-L-homocysteine + H(+). It participates in quinol/quinone metabolism; menaquinone biosynthesis; menaquinol from 1,4-dihydroxy-2-naphthoate: step 2/2. Its pathway is cofactor biosynthesis; ubiquinone biosynthesis. Functionally, methyltransferase required for the conversion of demethylmenaquinol (DMKH2) to menaquinol (MKH2) and the conversion of 2-polyprenyl-6-methoxy-1,4-benzoquinol (DDMQH2) to 2-polyprenyl-3-methyl-6-methoxy-1,4-benzoquinol (DMQH2). The protein is Ubiquinone/menaquinone biosynthesis C-methyltransferase UbiE of Shewanella halifaxensis (strain HAW-EB4).